We begin with the raw amino-acid sequence, 1807 residues long: MKGIVLALLLALAGSERTHIEPVFSESKISVYNYEAVILNGFPESGLSRAGIKINCKVEISAYAQRSYFLKIQSPEIKEYNGVWPKDPFTRSSKLTQALAEQLTKPARFEYSNGRVGDIFVADDVSDTVANIYRGILNLLQVTIKKSQDVYDLQESSVGGICHTRYVIQEDKRGDQIRIIKSTDFNNCQDKVSKTIGLELAEFCHSCKQLNRVIQGAATYTYKLKGRDQGTVIMEVTARQVLQVTPFAERHGAATMESRQVLAWVGSKSGQLTPPQIQLKNRGNLHYQFASELHQMPIHLMKTKSPEAQAVEVLQHLVQDTQQHIREDAPAKFLQLVQLLRASNFENLQALWKQFAQRTQYRRCLLDALPMAGTVDCLKFIKQLIHNEELTTQEAAVLITFAMRSARPGQRNFQISADLVQDSKVQKYSTVHKAAILAYGTMVRRYCDQLSSCPEHALEPLHELAAEAANKGHYEDIALALKALGNAGQPESIKRIQKFLPGFSSSADQLPVRIQTDAVMALRNIAKEDPRKVQEILLQIFMDRDVRTEVRMMACLALFETRPGLATVTAIANVAARESKTNLQLASFTFSQMKALSKSSVPHLEPLAAACSVALKILNPSLDNLGYRYSKVMRVDTFKYNLMAGAAAKVFIMNSANTMFPVFILAKFREYTSLVENDDIEIGIRGEGIEEFLRKQNIQFANFPMRKKISQIVKSLLGFKGLPSQVPLISGYIKLFGQEIAFTELNKEVIQNTIQALNQPAERHTMIRNVLNKLLNGVVGQYARRWMTWEYRHIIPTTVGLPAELSLYQSAIVHAAVNSDVKVKPTPSGDFSAAQLLESQIQLNGEVKPSVLVHTVATMGINSPLFQAGIEFHGKVHAHLPAKFTAFLDMKDRNFKIETPPFQQENHLVEIRAQTFAFTRNIADLDSARKTLVVPRNNEQNILKKHFETTGRTSAEGASMMEDSSEMGPKKYSAEPGHHQYAPNINSYDACTKFSKAGVHLCIQCKTHNAASRRNTIFYQAVGEHDFKLTMKPAHTEGAIEKLQLEITAGPKAASKIMGLVEVEGTEGEPMDETAVTKRLKMILGIDESRKDTNETALYRSKQKKKNKIHNRRLDAEVVEARKQQSSLSSSSSSSSSSSSSSSSSSSSSSSSSPSSSSSSSYSKRSKRREHNPHHQRESSSSSSQEQNKKRNLQENRKHGQKGMSSSSSSSSSSSSSSSSSSSSSSSSSSSSEENRPHKNRQHDNKQAKMQSNQHQQKKNKFSESSSSSSSSSSSEMWNKKKHHRNFYDLNFRRTARTKGTEHRGSRLSSSSESSSSSSESAYRHKAKFLGDKEPPVLVVTFKAVRNDNTKQGYQMVVYQEYHSSKQQIQAYVMDISKTRWAACFDAVVVNPHEAQASLKWGQNCQDYKINMKAETGNFGNQPALRVTANWPKIPSKWKSTGKVVGEYVPGAMYMMGFQGEYKRNSQRQVKLVFALSSPRTCDVVIRIPRLTVYYRALRLPVPIPVGHHAKENVLQTPTWNIFAEAPKLIMDSIQGECKVAQDQITTFNGVDLASALPENCYNVLAQDCSPEMKFMVLMRNSKESPNHKDINVKLGEYDIDMYYSADAFKMKINNLEVSEEHLPYKSFNYPTVEIKKKGNGVSLSASEYGIDSLDYDGLTFKFRPTIWMKGKTCGICGHNDDESEKELQMPDGSVAKDQMRFIHSWILPAESCSEGCNLKHTLVKLEKAIATDGAKAKCYSVQPVLRCAKGCSPVKTVEVSTGFHCLPSDVSLDLPEGQIRLEKSEDFSEKVEAHTACSCETSPCAA.

The N-terminal stretch at Met1–Ser15 is a signal peptide. One can recognise a Vitellogenin domain in the interval Phe24–Ile664. Residues Thr953–Ala974 form a disordered region. The N-linked (GlcNAc...) asparagine glycan is linked to Asn1094. The interval Glu1095–Glu1320 is disordered. The segment covering Ser1101–Asn1111 has biased composition (basic residues). A compositionally biased stretch (basic and acidic residues) spans Arg1112–Lys1123. Residues Ser1126–Ser1163 are compositionally biased toward low complexity. Positions Gln1187–Lys1198 are enriched in basic and acidic residues. Residues Ser1205–Ser1232 are compositionally biased toward low complexity. The segment covering Glu1233–Gln1247 has biased composition (basic and acidic residues). Composition is skewed to low complexity over residues Ser1263–Glu1276 and Ser1309–Glu1320. One can recognise a VWFD domain in the interval Gly1536–Ser1714. 2 cysteine pairs are disulfide-bonded: Cys1538-Cys1677 and Cys1561-Cys1713.

In terms of tissue distribution, produced by the liver, secreted into the blood and then sequestered by receptor mediated endocytosis into growing oocytes, where it is generally cleaved, giving rise to the respective yolk components.

In terms of biological role, precursor of the major egg-yolk proteins that are sources of nutrients during early development of oviparous organisms. The protein is Vitellogenin-A2 of Xenopus laevis (African clawed frog).